A 124-amino-acid chain; its full sequence is Small ribosomal subunit protein uS12 (124 aa).

D89 is modified (3-methylthioaspartic acid).

It belongs to the universal ribosomal protein uS12 family. As to quaternary structure, part of the 30S ribosomal subunit. Contacts proteins S8 and S17. May interact with IF1 in the 30S initiation complex.

Its function is as follows. With S4 and S5 plays an important role in translational accuracy. In terms of biological role, interacts with and stabilizes bases of the 16S rRNA that are involved in tRNA selection in the A site and with the mRNA backbone. Located at the interface of the 30S and 50S subunits, it traverses the body of the 30S subunit contacting proteins on the other side and probably holding the rRNA structure together. The combined cluster of proteins S8, S12 and S17 appears to hold together the shoulder and platform of the 30S subunit. In Buchnera aphidicola subsp. Cinara cedri (strain Cc), this protein is Small ribosomal subunit protein uS12.